The chain runs to 254 residues: Small ribosomal subunit protein uS2 (254 aa).

The protein belongs to the universal ribosomal protein uS2 family.

In Brucella ovis (strain ATCC 25840 / 63/290 / NCTC 10512), this protein is Small ribosomal subunit protein uS2.